Consider the following 175-residue polypeptide: Probable DNA-directed RNA polymerase subunit delta (175 aa).

Residues 14 to 81 enclose the HTH HARE-type domain; the sequence is CSMIEVVHSV…GENRWGLRSW (68 aa). Residues 91–175 form a disordered region; the sequence is ILPQPKPKKK…DETEEEEEEL (85 aa). Acidic residues predominate over residues 106–175; the sequence is DGFDDYIEED…DETEEEEEEL (70 aa).

This sequence belongs to the RpoE family. RNAP is composed of a core of 2 alpha, a beta and a beta' subunits. The core is associated with a delta subunit and one of several sigma factors.

In terms of biological role, participates in both the initiation and recycling phases of transcription. In the presence of the delta subunit, RNAP displays an increased specificity of transcription, a decreased affinity for nucleic acids, and an increased efficiency of RNA synthesis because of enhanced recycling. This Bacillus anthracis protein is Probable DNA-directed RNA polymerase subunit delta.